Reading from the N-terminus, the 346-residue chain is Anthranilate phosphoribosyltransferase (346 aa).

5-phospho-alpha-D-ribose 1-diphosphate contacts are provided by residues G88, G91–D92, T96, N98–T101, K116–S124, and A128. G88 is a binding site for anthranilate. S100 contributes to the Mg(2+) binding site. Residue N119 coordinates anthranilate. R174 is an anthranilate binding site. D233 and E234 together coordinate Mg(2+).

This sequence belongs to the anthranilate phosphoribosyltransferase family. Homodimer. The cofactor is Mg(2+).

The enzyme catalyses N-(5-phospho-beta-D-ribosyl)anthranilate + diphosphate = 5-phospho-alpha-D-ribose 1-diphosphate + anthranilate. Its pathway is amino-acid biosynthesis; L-tryptophan biosynthesis; L-tryptophan from chorismate: step 2/5. Catalyzes the transfer of the phosphoribosyl group of 5-phosphorylribose-1-pyrophosphate (PRPP) to anthranilate to yield N-(5'-phosphoribosyl)-anthranilate (PRA). In Paramagnetospirillum magneticum (strain ATCC 700264 / AMB-1) (Magnetospirillum magneticum), this protein is Anthranilate phosphoribosyltransferase.